Here is a 114-residue protein sequence, read N- to C-terminus: UPF0145 protein PF1756 (114 aa).

The protein belongs to the UPF0145 family.

This Pyrococcus furiosus (strain ATCC 43587 / DSM 3638 / JCM 8422 / Vc1) protein is UPF0145 protein PF1756.